The sequence spans 264 residues: Thiazole synthase (264 aa).

The active-site Schiff-base intermediate with DXP is Lys100. Residues Gly161, 187–188, and 209–210 contribute to the 1-deoxy-D-xylulose 5-phosphate site; these read AG and NT.

Belongs to the ThiG family. In terms of assembly, homotetramer. Forms heterodimers with either ThiH or ThiS.

The protein resides in the cytoplasm. It catalyses the reaction [ThiS sulfur-carrier protein]-C-terminal-Gly-aminoethanethioate + 2-iminoacetate + 1-deoxy-D-xylulose 5-phosphate = [ThiS sulfur-carrier protein]-C-terminal Gly-Gly + 2-[(2R,5Z)-2-carboxy-4-methylthiazol-5(2H)-ylidene]ethyl phosphate + 2 H2O + H(+). It participates in cofactor biosynthesis; thiamine diphosphate biosynthesis. Its function is as follows. Catalyzes the rearrangement of 1-deoxy-D-xylulose 5-phosphate (DXP) to produce the thiazole phosphate moiety of thiamine. Sulfur is provided by the thiocarboxylate moiety of the carrier protein ThiS. In vitro, sulfur can be provided by H(2)S. The sequence is that of Thiazole synthase from Nitrosospira multiformis (strain ATCC 25196 / NCIMB 11849 / C 71).